Here is a 1097-residue protein sequence, read N- to C-terminus: Protein kinase C-like 1 (1097 aa).

2 REM-1 domains span residues 2–76 (STSQ…QMQR) and 106–183 (KYEC…FSIN). The region spanning 189 to 311 (RDYEIMDSTK…AKDQGSSGWL (123 aa)) is the C2 domain. Residues 304–359 (DQGSSGWLPAANLPQTGGSGAGTGSSMTGGASYGATSPLPAHNDLRPSVSPSSDAK) form a disordered region. Over residues 327-340 (GSSMTGGASYGATS) the composition is skewed to low complexity. Phorbol-ester/DAG-type zinc fingers lie at residues 415 to 462 (GHQF…VTKC) and 480 to 530 (PHRF…PDFC). Disordered regions lie at residues 548 to 594 (KVSP…LRPA), 615 to 646 (YQEP…LSFE), and 724 to 763 (ETSH…RRKR). Over residues 574 to 583 (PSMDSEETLH) the composition is skewed to basic and acidic residues. Over residues 730–741 (QQNQQVQQVQQQ) the composition is skewed to low complexity. Residues 747-763 (QRTHSSGKSGKSKRRKR) are compositionally biased toward basic residues. In terms of domain architecture, Protein kinase spans 770-1029 (FQFLAVLGKG…AEEIMEHPYF (260 aa)). Residues 776 to 784 (LGKGNFGKV) and Lys-799 each bind ATP. Asp-895 acts as the Proton acceptor in catalysis. Positions 1030-1097 (HDVNFDDVLN…FSHISDNATI (68 aa)) constitute an AGC-kinase C-terminal domain.

This sequence belongs to the protein kinase superfamily. AGC Ser/Thr protein kinase family. PKC subfamily.

The enzyme catalyses L-seryl-[protein] + ATP = O-phospho-L-seryl-[protein] + ADP + H(+). It carries out the reaction L-threonyl-[protein] + ATP = O-phospho-L-threonyl-[protein] + ADP + H(+). Its function is as follows. Necessary for osmotic stability. The sequence is that of Protein kinase C-like 1 (PKC1) from Candida albicans (Yeast).